The chain runs to 856 residues: Envelope glycoprotein gp160 (856 aa).

A signal peptide spans 1–22 (MKGSKNQLLIAIVLASAYLIHC). Residues 23–670 (KQFVTVFYGI…FTSWVRYIQY (648 aa)) are Extracellular-facing. Residue Asn-37 is glycosylated (N-linked (GlcNAc...) asparagine; by host). A disulfide bond links Cys-44 and Cys-57. N-linked (GlcNAc...) asparagine; by host glycans are attached at residues Asn-70, Asn-79, Asn-112, Asn-116, Asn-128, Asn-133, Asn-142, Asn-182, Asn-183, Asn-196, Asn-228, Asn-231, Asn-238, Asn-262, Asn-268, Asn-279, Asn-290, Asn-300, Asn-355, Asn-390, Asn-400, Asn-440, and Asn-457. 5 cysteine pairs are disulfide-bonded: Cys-101–Cys-204, Cys-108–Cys-195, Cys-113–Cys-154, Cys-217–Cys-247, and Cys-227–Cys-239. A V1 region spans residues 113–153 (CTRNMTTWTGRTDTQNITIINDTSHARADNCTGLKEEEMID). The interval 154–195 (CQFSMTGLERDKRKQYTEAWYSKDVVCDNNTSSQSKCYMNHC) is V2. The tract at residues 295–328 (CKRPGNKTVLPITFMSGFKFHSQPVINKKPRQAW) is V3. Cys-295 and Cys-329 are disulfide-bonded. 2 disulfides stabilise this stretch: Cys-382–Cys-439 and Cys-389–Cys-412. Residues 389–412 (CNMTWFLNWVENRTGQKQRNYAPC) are V4. The tract at residues 455–460 (QTNITF) is V5. Positions 503–523 (GVFVLGFLGFLATAGSAMGAA) are fusion peptide. The interval 566–582 (LQARVTAIEKYLKDQAQ) is immunosuppression. Asn-602, Asn-611, and Asn-627 each carry an N-linked (GlcNAc...) asparagine; by host glycan. Positions 615-636 (QEWEQKVRYLEANISQSLEQAQ) form a coiled coil. The segment at 648-669 (KLNSWDVFTNWLDFTSWVRYIQ) is MPER; binding to GalCer. A helical membrane pass occupies residues 671-691 (GVYVVVGIVALRIVIYIVQML). Residues 692–856 (SRLRKGYRPV…IRQGAELALL (165 aa)) lie on the Cytoplasmic side of the membrane. The YXXV motif; contains endocytosis signal motif lies at 698-701 (YRPV). Cys-764 carries the S-palmitoyl cysteine; by host lipid modification. The Di-leucine internalization motif signature appears at 855 to 856 (LL).

The mature envelope protein (Env) consists of a homotrimer of non-covalently associated gp120-gp41 heterodimers. The resulting complex protrudes from the virus surface as a spike. There seems to be as few as 10 spikes on the average virion. Interacts with human CD4, CCR5 and CXCR4, to form a P4HB/PDI-CD4-CXCR4-gp120 complex. Gp120 also interacts with the C-type lectins CD209/DC-SIGN and CLEC4M/DC-SIGNR (collectively referred to as DC-SIGN(R)). Gp120 and gp41 interact with GalCer. In terms of assembly, the mature envelope protein (Env) consists of a homotrimer of non-covalently associated gp120-gp41 heterodimers. The resulting complex protrudes from the virus surface as a spike. There seems to be as few as 10 spikes on the average virion. Specific enzymatic cleavages in vivo yield mature proteins. Envelope glycoproteins are synthesized as an inactive precursor that is heavily N-glycosylated and processed likely by host cell furin in the Golgi to yield the mature SU and TM proteins. The cleavage site between SU and TM requires the minimal sequence [KR]-X-[KR]-R. In terms of processing, palmitoylation of the transmembrane protein and of Env polyprotein (prior to its proteolytic cleavage) is essential for their association with host cell membrane lipid rafts. Palmitoylation is therefore required for envelope trafficking to classical lipid rafts, but not for viral replication.

The protein resides in the virion membrane. Its subcellular location is the host cell membrane. It localises to the host endosome membrane. The surface protein gp120 (SU) attaches the virus to the host lymphoid cell by binding to the primary receptor CD4. This interaction induces a structural rearrangement creating a high affinity binding site for a chemokine coreceptor like CXCR4 and/or CCR5. This peculiar 2 stage receptor-interaction strategy allows gp120 to maintain the highly conserved coreceptor-binding site in a cryptic conformation, protected from neutralizing antibodies. Since CD4 also displays a binding site for the disulfide-isomerase P4HB/PDI, a P4HB/PDI-CD4-CXCR4-gp120 complex may form. In that complex, P4HB/PDI could reach and reduce gp120 disulfide bonds, causing major conformational changes in gp120. TXN, another PDI family member could also be involved in disulfide rearrangements in Env during fusion. These changes are transmitted to the transmembrane protein gp41 and are thought to activate its fusogenic potential by unmasking its fusion peptide. In terms of biological role, the surface protein gp120 is a ligand for CD209/DC-SIGN and CLEC4M/DC-SIGNR, which are respectively found on dendritic cells (DCs), and on endothelial cells of liver sinusoids and lymph node sinuses. These interactions allow capture of viral particles at mucosal surfaces by these cells and subsequent transmission to permissive cells. DCs are professional antigen presenting cells, critical for host immunity by inducing specific immune responses against a broad variety of pathogens. They act as sentinels in various tissues where they take up antigen, process it, and present it to T-cells following migration to lymphoid organs. HIV subverts the migration properties of dendritic cells to gain access to CD4+ T-cells in lymph nodes. Virus transmission to permissive T-cells occurs either in trans (without DCs infection, through viral capture and transmission), or in cis (following DCs productive infection, through the usual CD4-gp120 interaction), thereby inducing a robust infection. In trans infection, bound virions remain infectious over days and it is proposed that they are not degraded, but protected in non-lysosomal acidic organelles within the DCs close to the cell membrane thus contributing to the viral infectious potential during DCs' migration from the periphery to the lymphoid tissues. On arrival at lymphoid tissues, intact virions recycle back to DCs' cell surface allowing virus transmission to CD4+ T-cells. Virion capture also seems to lead to MHC-II-restricted viral antigen presentation, and probably to the activation of HIV-specific CD4+ cells. Its function is as follows. The transmembrane protein gp41 (TM) acts as a class I viral fusion protein. Under the current model, the protein has at least 3 conformational states: pre-fusion native state, pre-hairpin intermediate state, and post-fusion hairpin state. During fusion of viral and target intracellular membranes, the coiled coil regions (heptad repeats) assume a trimer-of-hairpins structure, positioning the fusion peptide in close proximity to the C-terminal region of the ectodomain. The formation of this structure appears to drive apposition and subsequent fusion of viral and target cell membranes. Complete fusion occurs in host cell endosomes and is dynamin-dependent, however some lipid transfer might occur at the plasma membrane. The virus undergoes clathrin-dependent internalization long before endosomal fusion, thus minimizing the surface exposure of conserved viral epitopes during fusion and reducing the efficacy of inhibitors targeting these epitopes. Membranes fusion leads to delivery of the nucleocapsid into the cytoplasm. Functionally, the envelope glycoprotein gp160 precursor down-modulates cell surface CD4 antigen by interacting with it in the endoplasmic reticulum and blocking its transport to the cell surface. The gp120-gp41 heterodimer seems to contribute to T-cell depletion during HIV-1 infection. The envelope glycoproteins expressed on the surface of infected cells induce apoptosis through an interaction with uninfected cells expressing the receptor (CD4) and the coreceptors CXCR4 or CCR5. This type of bystander killing may be obtained by at least three distinct mechanisms. First, the interaction between the 2 cells can induce cellular fusion followed by nuclear fusion within the syncytium. Syncytia are condemned to die from apoptosis. Second, the 2 interacting cells may not fuse entirely and simply exchange plasma membrane lipids, after a sort of hemifusion process, followed by rapid death. Third, it is possible that virus-infected cells, on the point of undergoing apoptosis, fuse with CD4-expressing cells, in which case apoptosis is rapidly transmitted from one cell to the other and thus occurs in a sort of contagious fashion. In terms of biological role, the gp120-gp41 heterodimer allows rapid transcytosis of the virus through CD4 negative cells such as simple epithelial monolayers of the intestinal, rectal and endocervical epithelial barriers. Both gp120 and gp41 specifically recognize glycosphingolipids galactosyl-ceramide (GalCer) or 3' sulfo-galactosyl-ceramide (GalS) present in the lipid rafts structures of epithelial cells. Binding to these alternative receptors allows the rapid transcytosis of the virus through the epithelial cells. This transcytotic vesicle-mediated transport of virions from the apical side to the basolateral side of the epithelial cells does not involve infection of the cells themselves. In Human immunodeficiency virus type 2 subtype A (isolate NIH-Z) (HIV-2), this protein is Envelope glycoprotein gp160 (env).